Reading from the N-terminus, the 128-residue chain is Large ribosomal subunit protein eL8 (128 aa).

The protein belongs to the eukaryotic ribosomal protein eL8 family. Part of the 50S ribosomal subunit. Probably part of the RNase P complex.

It is found in the cytoplasm. Multifunctional RNA-binding protein that recognizes the K-turn motif in ribosomal RNA, the RNA component of RNase P, box H/ACA, box C/D and box C'/D' sRNAs. The chain is Large ribosomal subunit protein eL8 from Nitrosopumilus maritimus (strain SCM1).